A 384-amino-acid chain; its full sequence is Outer membrane protein assembly factor BamC (384 aa).

A signal peptide spans 1–23; sequence MNKLNSVVVARGAVAVLLIGLAG. A lipid anchor (N-palmitoyl cysteine) is attached at cysteine 24. Residue cysteine 24 is the site of S-diacylglycerol cysteine attachment. Disordered stretches follow at residues 47–70 and 251–273; these read LEVPPDLTSPTRDDRYAVPDTSGK and QAAQEKPLERAKMTRGPDGSGTL.

This sequence belongs to the BamC family. As to quaternary structure, part of the Bam complex.

It localises to the cell outer membrane. In terms of biological role, part of the outer membrane protein assembly complex, which is involved in assembly and insertion of beta-barrel proteins into the outer membrane. The protein is Outer membrane protein assembly factor BamC of Accumulibacter regalis.